Here is a 209-residue protein sequence, read N- to C-terminus: Casparian strip membrane protein 1 (209 aa).

The Cytoplasmic segment spans residues 1 to 46 (MEKSESTKIDVVETNKERKGKAPLLGKAPVVAAAVVHAKGGGAKRG). Residues 47-67 (IAIFDLILRIAAFASALGAAV) traverse the membrane as a helical segment. Residues 68-96 (AMATTEETLPFFTQFFQFEASYDDLPTFT) lie on the Extracellular side of the membrane. The helical transmembrane segment at 97–117 (FFVVAMAIVVAYLVLSVPFSI) threads the bilayer. The Cytoplasmic segment spans residues 118-129 (VCIVRPHAVVPR). A helical transmembrane segment spans residues 130-150 (LLLIIFDTVIIALTTGAAGSS). The Extracellular portion of the chain corresponds to 151–179 (AAIVYLAHNGNQDANWLAICQQFGDFCQR). A helical membrane pass occupies residues 180–200 (VSGAVVAAFVTVVILIFLVVL). Residues 201-209 (SASALRRHH) are Cytoplasmic-facing.

Belongs to the Casparian strip membrane proteins (CASP) family. Homodimer and heterodimers.

The protein resides in the cell membrane. Its function is as follows. Regulates membrane-cell wall junctions and localized cell wall deposition. Required for establishment of the Casparian strip membrane domain (CSD) and the subsequent formation of Casparian strips, a cell wall modification of the root endodermis that determines an apoplastic barrier between the intraorganismal apoplasm and the extraorganismal apoplasm and prevents lateral diffusion. The polypeptide is Casparian strip membrane protein 1 (Nicotiana tabacum (Common tobacco)).